We begin with the raw amino-acid sequence, 473 residues long: GDP-fucose protein O-fucosyltransferase 2 (473 aa).

Residues 1-25 (MKNMIYNLISISLYSLIIILTDIYA) form the signal peptide. GDP-beta-L-fucose contacts are provided by residues 59–63 (GEGFN), 283–285 (HLR), and 379–380 (RF). E60 (proton acceptor) is an active-site residue.

Belongs to the glycosyltransferase 68 family.

It localises to the endoplasmic reticulum. It carries out the reaction L-seryl-[protein] + GDP-beta-L-fucose = 3-O-(alpha-L-fucosyl)-L-seryl-[protein] + GDP + H(+). It catalyses the reaction L-threonyl-[protein] + GDP-beta-L-fucose = 3-O-(alpha-L-fucosyl)-L-threonyl-[protein] + GDP + H(+). It functions in the pathway protein modification; protein glycosylation. Catalyzes the reaction that attaches fucose through an O-glycosidic linkage to a conserved serine or threonine residue in the consensus sequence C1-X-X-S/T-C2 of thrombospondin type I repeats (TSRs) where C1 and C2 are the first and second cysteines of the repeat, respectively. O-fucosylates sporozoite proteins CSP and TRAP. O-fucosylation regulates stability and intracellular trafficking of TRAP but not of CSP. Dispensable for parasite transmission to the mosquito vector and/or infection of the vertebrate host hepatocytes. The polypeptide is GDP-fucose protein O-fucosyltransferase 2 (Plasmodium berghei (strain Anka)).